Here is a 214-residue protein sequence, read N- to C-terminus: 3,4-dihydroxy-2-butanone 4-phosphate synthase (214 aa).

D-ribulose 5-phosphate-binding positions include 37 to 38 (RE), Asp-42, 150 to 154 (RRGHT), and Glu-174. A Mg(2+)-binding site is contributed by Glu-38. His-153 is a binding site for Mg(2+).

The protein belongs to the DHBP synthase family. In terms of assembly, homodimer. The cofactor is Mg(2+). It depends on Mn(2+) as a cofactor.

The enzyme catalyses D-ribulose 5-phosphate = (2S)-2-hydroxy-3-oxobutyl phosphate + formate + H(+). Its pathway is cofactor biosynthesis; riboflavin biosynthesis; 2-hydroxy-3-oxobutyl phosphate from D-ribulose 5-phosphate: step 1/1. In terms of biological role, catalyzes the conversion of D-ribulose 5-phosphate to formate and 3,4-dihydroxy-2-butanone 4-phosphate. The sequence is that of 3,4-dihydroxy-2-butanone 4-phosphate synthase from Desulfotalea psychrophila (strain LSv54 / DSM 12343).